The following is a 367-amino-acid chain: 3-dehydroquinate synthase (367 aa).

NAD(+) contacts are provided by residues 72–77 (DGENYK), 106–110 (GVIGD), 130–131 (TT), Lys-143, Lys-152, and 170–173 (FLST). Residues Glu-185, His-248, and His-265 each coordinate Zn(2+).

Belongs to the sugar phosphate cyclases superfamily. Dehydroquinate synthase family. Requires Co(2+) as cofactor. Zn(2+) serves as cofactor. NAD(+) is required as a cofactor.

The protein resides in the cytoplasm. It catalyses the reaction 7-phospho-2-dehydro-3-deoxy-D-arabino-heptonate = 3-dehydroquinate + phosphate. Its pathway is metabolic intermediate biosynthesis; chorismate biosynthesis; chorismate from D-erythrose 4-phosphate and phosphoenolpyruvate: step 2/7. In terms of biological role, catalyzes the conversion of 3-deoxy-D-arabino-heptulosonate 7-phosphate (DAHP) to dehydroquinate (DHQ). The sequence is that of 3-dehydroquinate synthase from Buchnera aphidicola subsp. Cinara cedri (strain Cc).